The chain runs to 566 residues: Oxygen-dependent choline dehydrogenase (566 aa).

7-36 is a binding site for FAD; that stretch reads DYIICGAGSAGNVLATRLTEDPNVTVLLLE. Residues 182–204 are disordered; that stretch reads YQQEGFGPMDRTVTPKGRRASTA. The Proton acceptor role is filled by H474.

Belongs to the GMC oxidoreductase family. It depends on FAD as a cofactor.

It catalyses the reaction choline + A = betaine aldehyde + AH2. The enzyme catalyses betaine aldehyde + NAD(+) + H2O = glycine betaine + NADH + 2 H(+). Its pathway is amine and polyamine biosynthesis; betaine biosynthesis via choline pathway; betaine aldehyde from choline (cytochrome c reductase route): step 1/1. Involved in the biosynthesis of the osmoprotectant glycine betaine. Catalyzes the oxidation of choline to betaine aldehyde and betaine aldehyde to glycine betaine at the same rate. This is Oxygen-dependent choline dehydrogenase from Burkholderia multivorans (strain ATCC 17616 / 249).